Reading from the N-terminus, the 248-residue chain is DCN1-like protein 4 (248 aa).

The tract at residues 1–35 (MPRGKRRAADTISDNMDHGQPKRARTSYTSIPTQQ) is disordered. Polar residues predominate over residues 26-35 (TSYTSIPTQQ). In terms of domain architecture, DCUN1 spans 47-235 (FSQKRCMAWF…MLDEFVEWLR (189 aa)).

The protein resides in the nucleus. In terms of biological role, inhibits neddylation of cullin components of SCF-type E3 ubiquitin ligase complexes and thus regulates SCF-type complex activity. Essential for development. Function inhibits cell proliferation and cell growth. The sequence is that of DCN1-like protein 4 from Drosophila melanogaster (Fruit fly).